A 329-amino-acid chain; its full sequence is Malate dehydrogenase (329 aa).

12–18 (GAAGQIG) is a binding site for NAD(+). Residues Arg95 and Arg101 each contribute to the substrate site. NAD(+)-binding positions include Asn108, Gln115, and 132–134 (VGN). Asn134 and Arg165 together coordinate substrate. His190 acts as the Proton acceptor in catalysis.

The protein belongs to the LDH/MDH superfamily. MDH type 2 family.

It carries out the reaction (S)-malate + NAD(+) = oxaloacetate + NADH + H(+). Functionally, catalyzes the reversible oxidation of malate to oxaloacetate. The chain is Malate dehydrogenase from Bordetella bronchiseptica (strain ATCC BAA-588 / NCTC 13252 / RB50) (Alcaligenes bronchisepticus).